A 538-amino-acid polypeptide reads, in one-letter code: Hydroxylamine reductase (538 aa).

Cys3, Cys6, Cys15, and Cys21 together coordinate [4Fe-4S] cluster. Positions 239, 263, 307, 394, 422, 447, 481, and 483 each coordinate hybrid [4Fe-2O-2S] cluster. At Cys394 the chain carries Cysteine persulfide.

The protein belongs to the HCP family. It depends on [4Fe-4S] cluster as a cofactor. Hybrid [4Fe-2O-2S] cluster is required as a cofactor.

The protein localises to the cytoplasm. The enzyme catalyses A + NH4(+) + H2O = hydroxylamine + AH2 + H(+). In terms of biological role, catalyzes the reduction of hydroxylamine to form NH(3) and H(2)O. The polypeptide is Hydroxylamine reductase (Solidesulfovibrio magneticus (strain ATCC 700980 / DSM 13731 / RS-1) (Desulfovibrio magneticus)).